Here is a 235-residue protein sequence, read N- to C-terminus: Glucosamine-6-phosphate deaminase (235 aa).

Catalysis depends on Asp62, which acts as the Proton acceptor; for enolization step. Asn128 (for ring-opening step) is an active-site residue. The Proton acceptor; for ring-opening step role is filled by His130. Glu135 (for ring-opening step) is an active-site residue.

The protein belongs to the glucosamine/galactosamine-6-phosphate isomerase family. NagB subfamily.

It catalyses the reaction alpha-D-glucosamine 6-phosphate + H2O = beta-D-fructose 6-phosphate + NH4(+). The protein operates within amino-sugar metabolism; N-acetylneuraminate degradation; D-fructose 6-phosphate from N-acetylneuraminate: step 5/5. Functionally, catalyzes the reversible isomerization-deamination of glucosamine 6-phosphate (GlcN6P) to form fructose 6-phosphate (Fru6P) and ammonium ion. The protein is Glucosamine-6-phosphate deaminase of Streptococcus pneumoniae serotype 2 (strain D39 / NCTC 7466).